Reading from the N-terminus, the 231-residue chain is Response regulator MprA (231 aa).

The Response regulatory domain occupies 4–118 (RILVVDDDRA…ELLARMRALL (115 aa)). Aspartate 48 is modified (4-aspartylphosphate). Residues 130–228 (SAAMTFSDLS…VRGVGYVLRE (99 aa)) constitute a DNA-binding region (ompR/PhoB-type).

Phosphorylated and dephosphorylated by MprB.

It localises to the cytoplasm. In terms of biological role, member of the two-component regulatory system MprB/MprA which contributes to maintaining a balance among several systems involved in stress resistance and is required for establishment and maintenance of persistent infection in the host. Functions as a transcriptional regulator that recognizes a 19-bp nucleotide motif comprizing two loosely conserved 8-bp direct DNA-binding motif repeats separated by a 3-bp spacer region. In Mycolicibacterium vanbaalenii (strain DSM 7251 / JCM 13017 / BCRC 16820 / KCTC 9966 / NRRL B-24157 / PYR-1) (Mycobacterium vanbaalenii), this protein is Response regulator MprA (mprA).